Consider the following 77-residue polypeptide: VpAmp2.0 (77 aa).

Residues 1 to 23 (MQLRKALLVIFVAYLLVTDEAEA) form the signal peptide. Positions 49–77 (RKREIEDLFDPYQKDLDLQRLDRFFSQFQ) are excised as a propeptide.

The protein belongs to the non-disulfide-bridged peptide (NDBP) superfamily. Medium-length antimicrobial peptide (group 3) family. Expressed by the venom gland.

The protein localises to the secreted. It localises to the target cell membrane. In terms of biological role, antimicrobial peptide with potent activity against Gram-positive bacteria S.aureus (MIC=10 uM) and S.agalactiaea (MIC=15 uM), and Gram-negative bacteria E.coli (MIC=24 uM) and P.aeruginosa (MIC=15 uM), as well as against yeasts Candida albicans (MIC=3.1 uM) and C.glabrata (MIC=25 uM). Also elicits low hemolysis on human erythrocytes (HC(50)=167 uM). This Mesomexovis punctatus (Scorpion) protein is VpAmp2.0.